Here is a 262-residue protein sequence, read N- to C-terminus: Acyl-[acyl-carrier-protein]--UDP-N-acetylglucosamine O-acyltransferase (262 aa).

The protein belongs to the transferase hexapeptide repeat family. LpxA subfamily. Homotrimer.

It localises to the cytoplasm. The enzyme catalyses a (3R)-hydroxyacyl-[ACP] + UDP-N-acetyl-alpha-D-glucosamine = a UDP-3-O-[(3R)-3-hydroxyacyl]-N-acetyl-alpha-D-glucosamine + holo-[ACP]. Its pathway is glycolipid biosynthesis; lipid IV(A) biosynthesis; lipid IV(A) from (3R)-3-hydroxytetradecanoyl-[acyl-carrier-protein] and UDP-N-acetyl-alpha-D-glucosamine: step 1/6. Its function is as follows. Involved in the biosynthesis of lipid A, a phosphorylated glycolipid that anchors the lipopolysaccharide to the outer membrane of the cell. The sequence is that of Acyl-[acyl-carrier-protein]--UDP-N-acetylglucosamine O-acyltransferase from Haemophilus influenzae (strain PittEE).